The sequence spans 588 residues: Transcription factor 7-like 1 (588 aa).

The segment covering 1–31 (MPQLGGGGGGGGGGSGGGGGSSAGAAGGGDD) has biased composition (gly residues). The segment at 1–74 (MPQLGGGGGG…VKSSLVNESE (74 aa)) is CTNNB1-binding. 3 disordered regions span residues 1–101 (MPQL…PRDY), 203–234 (SPGSPPTHLSPEIDPKTGIPRPPHPSELSPYY), and 409–506 (LYPT…LSLT). Over residues 67–81 (SSLVNESENQSSSSD) the composition is skewed to low complexity. The span at 83-101 (EAERRPQPVRDTFQKPRDY) shows a compositional bias: basic and acidic residues. A DNA-binding region (HMG box) is located at residues 346–414 (VKKPLNAFML…LHSQLYPTWS (69 aa)). A Nuclear localization signal motif is present at residues 421-427 (KKKKRKR). Low complexity-rich tracts occupy residues 431–441 (LSQTQSQQQVQ) and 478–497 (SPATPSAALASPAAPAATHS).

This sequence belongs to the TCF/LEF family. As to quaternary structure, binds the armadillo repeat of CTNNB1 and forms a stable complex. Interacts with DAZAP2. Detected in hair follicles and skin keratinocytes, and at lower levels in stomach epithelium.

It localises to the nucleus. Participates in the Wnt signaling pathway. Binds to DNA and acts as a repressor in the absence of CTNNB1, and as an activator in its presence. Necessary for the terminal differentiation of epidermal cells, the formation of keratohyalin granules and the development of the barrier function of the epidermis. Down-regulates NQO1, leading to increased mitomycin c resistance. In Homo sapiens (Human), this protein is Transcription factor 7-like 1 (TCF7L1).